The primary structure comprises 226 residues: Ribonuclease 3 (226 aa).

The RNase III domain occupies 7–129 (LPRLCRTLGY…IIGAIYLDSD (123 aa)). Glu-42 contacts Mg(2+). The active site involves Asp-46. Mg(2+)-binding residues include Asp-115 and Glu-118. Glu-118 is a catalytic residue. Residues 156 to 226 (DAKTLLQEYL…AAQVLELLKK (71 aa)) enclose the DRBM domain.

Belongs to the ribonuclease III family. In terms of assembly, homodimer. It depends on Mg(2+) as a cofactor.

Its subcellular location is the cytoplasm. It catalyses the reaction Endonucleolytic cleavage to 5'-phosphomonoester.. Functionally, digests double-stranded RNA. Involved in the processing of primary rRNA transcript to yield the immediate precursors to the large and small rRNAs (23S and 16S). Processes some mRNAs, and tRNAs when they are encoded in the rRNA operon. Processes pre-crRNA and tracrRNA of type II CRISPR loci if present in the organism. This Shewanella sp. (strain ANA-3) protein is Ribonuclease 3.